We begin with the raw amino-acid sequence, 428 residues long: MKVQRPKGTVDILPAESGSWEKVETIARNFFKRANYREIRTPSFENYEVFSRSSGESSDVVEKEMYDFNDKGGRHIALRPEGTAGVVRAYVENKLYGPDVVKPFNVYYIDNTFRYERPQAGRQREFHQIGVESFGSNSPLADVETIMMGHDLLAELGVKNYELHINTLGNAQVRKDYHDALVNYFTPLKDQLSEDSQRRLSMNPLRILDSKAEEDKQFLPDAPRIVDYLDEDSKKNFETITDMLEQLGINYVLDDDLVRGLDYYTGVIFEFMVEDKNLWESATTILGGGRYNHLVEEFDGPETPAVGFGIGEERLMLVLKEQNPALFEDEGIDFFITNIGEGTEMKAVEIARSLRKQDFKAQYDVDQKKLKQQFRKADRVHAKFVITLGAKELENGVLNIKRLADGKTLDLSLEDLNDMKSVMEKIED.

It belongs to the class-II aminoacyl-tRNA synthetase family. As to quaternary structure, homodimer.

Its subcellular location is the cytoplasm. It carries out the reaction tRNA(His) + L-histidine + ATP = L-histidyl-tRNA(His) + AMP + diphosphate + H(+). The polypeptide is Histidine--tRNA ligase (Lactobacillus gasseri (strain ATCC 33323 / DSM 20243 / BCRC 14619 / CIP 102991 / JCM 1131 / KCTC 3163 / NCIMB 11718 / NCTC 13722 / AM63)).